A 332-amino-acid chain; its full sequence is RNA polymerase II holoenzyme cyclin-like subunit (332 aa).

Residues 74 to 175 form the Cyclin N-terminal domain; that stretch reads RIYCYFLIMK…LIEELQSYMI (102 aa).

This sequence belongs to the cyclin family. Cyclin C subfamily. As to quaternary structure, component of the SRB8-11 complex, a regulatory module of the Mediator complex.

Its subcellular location is the nucleus. Its function is as follows. Component of the SRB8-11 complex. The SRB8-11 complex is a regulatory module of the Mediator complex which is itself involved in regulation of basal and activated RNA polymerase II-dependent transcription. The SRB8-11 complex may be involved in the transcriptional repression of a subset of genes regulated by Mediator. It may inhibit the association of the Mediator complex with RNA polymerase II to form the holoenzyme complex. The SRB8-11 complex phosphorylates the C-terminal domain (CTD) of the largest subunit of RNA polymerase II. The sequence is that of RNA polymerase II holoenzyme cyclin-like subunit (SSN8) from Eremothecium gossypii (strain ATCC 10895 / CBS 109.51 / FGSC 9923 / NRRL Y-1056) (Yeast).